Reading from the N-terminus, the 308-residue chain is Methionyl-tRNA formyltransferase (308 aa).

(6S)-5,6,7,8-tetrahydrofolate is bound at residue 110-113 (SLLP).

It belongs to the Fmt family.

The enzyme catalyses L-methionyl-tRNA(fMet) + (6R)-10-formyltetrahydrofolate = N-formyl-L-methionyl-tRNA(fMet) + (6S)-5,6,7,8-tetrahydrofolate + H(+). In terms of biological role, attaches a formyl group to the free amino group of methionyl-tRNA(fMet). The formyl group appears to play a dual role in the initiator identity of N-formylmethionyl-tRNA by promoting its recognition by IF2 and preventing the misappropriation of this tRNA by the elongation apparatus. The polypeptide is Methionyl-tRNA formyltransferase (Neisseria gonorrhoeae (strain ATCC 700825 / FA 1090)).